Here is a 138-residue protein sequence, read N- to C-terminus: Cysteine desulfuration protein SufE (138 aa).

Cys51 serves as the catalytic Cysteine persulfide intermediate.

It belongs to the SufE family. Homodimer. Interacts with SufS.

The protein localises to the cytoplasm. It participates in cofactor biosynthesis; iron-sulfur cluster biosynthesis. In terms of biological role, participates in cysteine desulfuration mediated by SufS. Cysteine desulfuration mobilizes sulfur from L-cysteine to yield L-alanine and constitutes an essential step in sulfur metabolism for biosynthesis of a variety of sulfur-containing biomolecules. Functions as a sulfur acceptor for SufS, by mediating the direct transfer of the sulfur atom from the S-sulfanylcysteine of SufS, an intermediate product of cysteine desulfuration process. The polypeptide is Cysteine desulfuration protein SufE (Escherichia coli O8 (strain IAI1)).